Here is a 214-residue protein sequence, read N- to C-terminus: Outer-membrane lipoprotein carrier protein (214 aa).

An N-terminal signal peptide occupies residues 1–23 (MNKRITVLSLLLATSLSSAAAMA).

It belongs to the LolA family. As to quaternary structure, monomer.

Its subcellular location is the periplasm. In terms of biological role, participates in the translocation of lipoproteins from the inner membrane to the outer membrane. Only forms a complex with a lipoprotein if the residue after the N-terminal Cys is not an aspartate (The Asp acts as a targeting signal to indicate that the lipoprotein should stay in the inner membrane). This Shewanella frigidimarina (strain NCIMB 400) protein is Outer-membrane lipoprotein carrier protein.